The sequence spans 492 residues: N-succinylglutamate 5-semialdehyde dehydrogenase (492 aa).

220 to 225 (GSANTG) is an NAD(+) binding site. Catalysis depends on residues E243 and C277.

This sequence belongs to the aldehyde dehydrogenase family. AstD subfamily.

The catalysed reaction is N-succinyl-L-glutamate 5-semialdehyde + NAD(+) + H2O = N-succinyl-L-glutamate + NADH + 2 H(+). Its pathway is amino-acid degradation; L-arginine degradation via AST pathway; L-glutamate and succinate from L-arginine: step 4/5. Catalyzes the NAD-dependent reduction of succinylglutamate semialdehyde into succinylglutamate. The chain is N-succinylglutamate 5-semialdehyde dehydrogenase from Escherichia coli O139:H28 (strain E24377A / ETEC).